The following is a 1063-amino-acid chain: MASTTPITMEDLQKALEAQSRALRAELAAGASQSRRPRPPRQRDSSTSGDDSGRDSGGPRRRRGNRGRGQRRDWSRAPPPPEERQETRSQTPAPKPSRAPPQQPQPPRMQTGRGGSAPRPELGPPTNPFQAAVARGLRPPLHDPDTEAPTEACVTSWLWSEGEGAVFYRVDLHFTNLGTPPLDEDGRWDPALMYNPCGPEPPAHVVRAYNQPAGDVRGVWGKGERTYAEQDFRVGGTRWHRLLRMPVRGLDGDSAPLPPHTTERIETRSARHPWRIRFGAPQAFLAGLLLATVAVGTARAGLQPRADMAAPPTLPQPPCAHGQHYGHHHHQLPFLGHDGHHGGTLRVGQHYRNASDVLPGHWLQGGWGCYNLSDWHQGTHVCHTKHMDFWCVEHDRPPPATPTPLTTAANSTTAATPATAPAPCHAGLNDSCGGFLSGCGPMRLRHGADTRCGRLICGLSTTAQYPPTRFGCAMRWGLPPWELVVLTARPEDGWTCRGVPAHPGARCPELVSPMGRATCSPASALWLATANALSLDHALAAFVLLVPWVLIFMVCRRACRRRGAAAALTAVVLQGYNPPAYGEEAFTYLCTAPGCATQAPVPVRLAGVRFESKIVDGGCFAPWDLEATGACICEIPTDVSCEGLGAWVPAAPCARIWNGTQRACTFWAVNAYSSGGYAQLASYFNPGGSYYKQYHPTACEVEPAFGHSDAACWGFPTDTVMSVFALASYVQHPHKTVRVKFHTETRTVWQLSVAGVSCNVTTEHPFCNTPHGQLEVQVPPDPGDLVEYIMNYTGNQQSRWGLGSPNCHGPDWASPVCQRHSPDCSRLVGATPERPRLRLVDADDPLLRTAPGPGEVWVTPVIGSQARKCGLHIRAGPYGHATVEMPEWIHAHTTSDPWHPPGPLGLKFKTVRPVALPRTLAPPRNVRVTGCYQCGTPALVEGLAPGGGNCHLTVNGEDLGAVPPGKFVTAALLNTPPPYQVSCGGESDRATARVIDPAAQSFTGVVYGTHTTAVSETRQTWAEWAAAHWWQLTLGAICALPLAGLLACCAKCLYYLRGAIAPR.

The segment at Met-1–Ala-131 is disordered. Positions Gly-30–Gly-69 are human C1QBP/SF2P32-binding. Ser-46 is modified (phosphoserine; by host). The segment covering Pro-59–Gly-69 has biased composition (basic residues). Basic and acidic residues predominate over residues Gln-70–Thr-87. Pro residues predominate over residues Ala-93–Pro-107. Residues Cys-153 and Cys-197 are joined by a disulfide bond. The tract at residues Gly-279 to Ala-300 is functions as E2 signal peptide. The Extracellular segment spans residues Gly-301–Ser-534. 4 N-linked (GlcNAc...) asparagine; by host glycosylation sites follow: Asn-353, Asn-371, Asn-410, and Asn-429. The chain crosses the membrane as a helical span at residues Leu-535–Cys-555. The Cytoplasmic portion of the chain corresponds to Arg-556–Gly-582. The functions as E1 signal peptide stretch occupies residues Gly-563 to Gly-582. At Glu-583–His-1028 the chain is on the extracellular side. 8 disulfides stabilise this stretch: Cys-590/Cys-595, Cys-619/Cys-824, Cys-641/Cys-653, Cys-699/Cys-712, Cys-758/Cys-767, Cys-807/Cys-817, Cys-931/Cys-934, and Cys-950/Cys-983. N-linked (GlcNAc...) asparagine; by host glycosylation is present at Asn-658. 2 residues coordinate Ca(2+): Asn-670 and Ala-671. 2 residues coordinate Ca(2+): Asp-718 and Thr-719. N-linked (GlcNAc...) asparagine; by host glycans are attached at residues Asn-759 and Asn-791. O-linked (GalNAc...) threonine; by host glycans are attached at residues Thr-1011 and Thr-1012. The helical transmembrane segment at Trp-1029–Cys-1049 threads the bilayer. Residues Ala-1050 to Arg-1063 are Extracellular-facing.

As to quaternary structure, homodimer; further assembles into homooligomer. Interacts with human C1QBP. Interacts (via N-terminus) with protease/methyltransferase p150. Heterodimer with spike glycoprotein E2. In terms of assembly, heterodimer with spike glycoprotein E1. Post-translationally, structural polyprotein: Specific enzymatic cleavages in vivo yield mature proteins. Two signal peptidase-mediated cleavages within the polyprotein produce the structural proteins capsid, E2, and E1. The E2 signal peptide remains attached to the C-terminus of the capsid protein after cleavage by the signal peptidase. Another signal peptide at E2 C-terminus directs E1 to the ER, with a similar mechanism. Contains three N-linked oligosaccharides. In terms of processing, capsid is phosphorylated on Ser-46 by host. This phosphorylation negatively regulates capsid protein RNA-binding activity. Dephosphorylated by human PP1A.

It localises to the virion. Its subcellular location is the host cytoplasm. The protein localises to the host mitochondrion. It is found in the virion membrane. The protein resides in the host Golgi apparatus membrane. Capsid protein interacts with genomic RNA and assembles into icosahedric core particles 65-70 nm in diameter. The resulting nucleocapsid eventually associates with the cytoplasmic domain of E2 at the cell membrane, leading to budding and formation of mature virions from host Golgi membranes. Phosphorylation negatively regulates RNA-binding activity, possibly delaying virion assembly during the viral replication phase. Capsid protein dimerizes and becomes disulfide-linked in the virion. Modulates genomic RNA replication. Modulates subgenomic RNA synthesis by interacting with human C1QBP/SF2P32. Induces both perinuclear clustering of mitochondria and the formation of electron-dense intermitochondrial plaques, both hallmarks of rubella virus infected cells. Induces apoptosis when expressed in transfected cells. Its function is as follows. Responsible for viral attachment to target host cell, by binding to the cell receptor. Its transport to the plasma membrane depends on interaction with E1 protein. The surface glycoproteins display an irregular helical organization and a pseudo-tetrameric inner nucleocapsid arrangement. In terms of biological role, class II viral fusion protein. Fusion activity is inactive as long as E1 is bound to E2 in mature virion. After virus attachment to target cell and clathrin-mediated endocytosis, acidification of the endosome would induce dissociation of E1/E2 heterodimer and concomitant trimerization of the E1 subunits. This E1 homotrimer is fusion active, and promotes release of viral nucleocapsid in cytoplasm after endosome and viral membrane fusion. The cytoplasmic tail of spike glycoprotein E1 modulates virus release. The surface glycoproteins display an irregular helical organization and a pseudo-tetrameric inner nucleocapsid arrangement. The sequence is that of Structural polyprotein from Rubella virus (strain Therien) (RUBV).